Here is a 60-residue protein sequence, read N- to C-terminus: Ribosome biogenesis protein Nop10 (60 aa).

Belongs to the NOP10 family.

Its function is as follows. Involved in ribosome biogenesis; more specifically in 18S rRNA pseudouridylation and in cleavage of pre-rRNA. The sequence is that of Ribosome biogenesis protein Nop10 from Haloquadratum walsbyi (strain DSM 16790 / HBSQ001).